Reading from the N-terminus, the 69-residue chain is Pancreatic propolypeptide YG (69 aa).

Belongs to the NPY family.

It localises to the secreted. In Lophius americanus (American angler), this protein is Pancreatic propolypeptide YG.